A 137-amino-acid chain; its full sequence is Nucleoside diphosphate kinase (137 aa).

Residues K9, F58, R86, T92, R103, and N113 each contribute to the ATP site. H121 (pros-phosphohistidine intermediate) is an active-site residue.

The protein belongs to the NDK family. As to quaternary structure, homotetramer. It depends on Mg(2+) as a cofactor.

The protein localises to the cytoplasm. It carries out the reaction a 2'-deoxyribonucleoside 5'-diphosphate + ATP = a 2'-deoxyribonucleoside 5'-triphosphate + ADP. It catalyses the reaction a ribonucleoside 5'-diphosphate + ATP = a ribonucleoside 5'-triphosphate + ADP. Major role in the synthesis of nucleoside triphosphates other than ATP. The ATP gamma phosphate is transferred to the NDP beta phosphate via a ping-pong mechanism, using a phosphorylated active-site intermediate. This chain is Nucleoside diphosphate kinase, found in Streptococcus pneumoniae (strain P1031).